The chain runs to 284 residues: Diaminopimelate epimerase (284 aa).

Residues Asn20, Gln53, and Asn73 each contribute to the substrate site. Cys82 acts as the Proton donor in catalysis. Residues 83 to 84, Asn167, Asn200, and 218 to 219 contribute to the substrate site; these read GN and ER. Cys227 (proton acceptor) is an active-site residue. 228–229 contributes to the substrate binding site; it reads GS.

This sequence belongs to the diaminopimelate epimerase family. As to quaternary structure, homodimer.

The protein localises to the cytoplasm. The enzyme catalyses (2S,6S)-2,6-diaminopimelate = meso-2,6-diaminopimelate. The protein operates within amino-acid biosynthesis; L-lysine biosynthesis via DAP pathway; DL-2,6-diaminopimelate from LL-2,6-diaminopimelate: step 1/1. In terms of biological role, catalyzes the stereoinversion of LL-2,6-diaminopimelate (L,L-DAP) to meso-diaminopimelate (meso-DAP), a precursor of L-lysine and an essential component of the bacterial peptidoglycan. This chain is Diaminopimelate epimerase, found in Xylella fastidiosa (strain 9a5c).